Consider the following 556-residue polypeptide: Portal protein (556 aa).

The segment at 527-556 (AQGAKTLSETQTSDPSALTAIANAAGAPQQ) is disordered. The segment covering 533–542 (LSETQTSDPS) has biased composition (polar residues).

It belongs to the podoviridae head-to-tail connector protein family. As to quaternary structure, homododecamer.

It localises to the virion. Forms the portal vertex of the capsid. This portal plays critical roles in head assembly, genome packaging, neck/tail attachment, and genome ejection. The portal protein multimerizes as a single ring-shaped homododecamer arranged around a central channel. The sequence is that of Portal protein from Salmonella phage epsilon15.